The sequence spans 215 residues: Peroxiredoxin 1 (215 aa).

The region spanning 2–157 (KLLGEKFPSM…ILRALKALQT (156 aa)) is the Thioredoxin domain. Cysteine 44 acts as the Cysteine sulfenic acid (-SOH) intermediate in catalysis. Arginine 120 is a binding site for substrate.

The protein belongs to the peroxiredoxin family. Prx6 subfamily. In terms of assembly, homodecamer. Pentamer of dimers that assemble into a ring structure.

It localises to the cytoplasm. The enzyme catalyses a hydroperoxide + [thioredoxin]-dithiol = an alcohol + [thioredoxin]-disulfide + H2O. Its function is as follows. Thiol-specific peroxidase that catalyzes the reduction of hydrogen peroxide and organic hydroperoxides to water and alcohols, respectively. Plays a role in cell protection against oxidative stress by detoxifying peroxides. This is Peroxiredoxin 1 from Caldanaerobacter subterraneus subsp. tengcongensis (strain DSM 15242 / JCM 11007 / NBRC 100824 / MB4) (Thermoanaerobacter tengcongensis).